Reading from the N-terminus, the 127-residue chain is Interacting with cytoskeleton protein 1 (127 aa).

The protein resides in the vacuole membrane. In terms of biological role, required for viability of cells lacking mtDNA. The chain is Interacting with cytoskeleton protein 1 (ICY1) from Saccharomyces cerevisiae (strain ATCC 204508 / S288c) (Baker's yeast).